A 189-amino-acid chain; its full sequence is NADH-quinone oxidoreductase subunit B (189 aa).

[4Fe-4S] cluster is bound by residues cysteine 39, cysteine 40, cysteine 104, and cysteine 135.

It belongs to the complex I 20 kDa subunit family. In terms of assembly, NDH-1 is composed of 14 different subunits. Subunits NuoB, C, D, E, F, and G constitute the peripheral sector of the complex. Requires [4Fe-4S] cluster as cofactor.

Its subcellular location is the cell inner membrane. It carries out the reaction a quinone + NADH + 5 H(+)(in) = a quinol + NAD(+) + 4 H(+)(out). In terms of biological role, NDH-1 shuttles electrons from NADH, via FMN and iron-sulfur (Fe-S) centers, to quinones in the respiratory chain. The immediate electron acceptor for the enzyme in this species is believed to be a menaquinone. Couples the redox reaction to proton translocation (for every two electrons transferred, four hydrogen ions are translocated across the cytoplasmic membrane), and thus conserves the redox energy in a proton gradient. The chain is NADH-quinone oxidoreductase subunit B from Chlorobium phaeovibrioides (strain DSM 265 / 1930) (Prosthecochloris vibrioformis (strain DSM 265)).